An 86-amino-acid chain; its full sequence is U-myrmeciitoxin(01)-Mg1a (86 aa).

The N-terminal stretch at 1–26 (MKLLYLLLTLAIIFVLTIVHAPNVEA) is a signal peptide. Residues 27–52 (KALADPESDAVGFADAFGDADAEATG) constitute a propeptide that is removed on maturation. The residue at position 85 (leucine 85) is a Leucine amide.

This sequence belongs to the formicidae venom precursor-01 superfamily. Expressed by the venom gland. This toxin is detected along the entire venom gland, as well as in the venom reservoir, the venom duct and in the venom. No toxin are detected in the Dufour's gland.

It localises to the secreted. The protein localises to the target cell membrane. Functionally, toxin that may interact with target cell membranes, producing a concentration-dependent leak in ion conductance, possibly via multimeric pore formation. It produces an immediate sharp increase of calcium concentration in all DRG neurons. This influx in calcium stabilizes without resulting in any observable dye leakage, showing that the effect is not simply cytolytic. This toxin may be one of the major contributors to the pain associated with envenomation. The toxin also displays a weak cytotoxicity (on HEK cells) and some antimicrobial activity (MIC=2.5 uM on C.neoformans (var. grubii), MIC=10.2 uM on S.aureus), but is not hemolytic to human erythtrocytes. In vivo, intraplantar injection into mice causes spontaneous nocifensive behavior (licking, flinching, or shaking of the paw), which lasts 5-7 minutes (10 and 100 uM tested). Mechanical and heat hypoalgesia are observed at 20 and 25 minutes after injection (highest dose tested of 100 uM). In vivo, injection into crickets (A.domesticus) causes an immediate, dose-dependent, reversible and nonlethal incapacitation that lasts about 53 minutes at the highest dose tested (60 ug/g). The polypeptide is U-myrmeciitoxin(01)-Mg1a (Myrmecia gulosa (Red bulldog ant)).